We begin with the raw amino-acid sequence, 182 residues long: Thioredoxin X, chloroplastic (182 aa).

The transit peptide at 1-67 (MDSIVSSSTI…TRKSSSSVIR (67 aa)) directs the protein to the chloroplast. Residues 68–177 (CGGIKEIGES…LKEYIDGLLN (110 aa)) form the Thioredoxin domain. Residues C99 and C102 each act as nucleophile in the active site. C99 and C102 form a disulfide bridge.

Belongs to the thioredoxin family. As to expression, predominantly expressed in leaves.

It localises to the plastid. Its subcellular location is the chloroplast stroma. Probable thiol-disulfide oxidoreductase that may participate in various redox reactions. The sequence is that of Thioredoxin X, chloroplastic (ATHX) from Arabidopsis thaliana (Mouse-ear cress).